We begin with the raw amino-acid sequence, 229 residues long: Cytidylate kinase (229 aa).

10–18 serves as a coordination point for ATP; it reads GHSSSGKST.

The protein belongs to the cytidylate kinase family. Type 1 subfamily.

The protein resides in the cytoplasm. The catalysed reaction is CMP + ATP = CDP + ADP. The enzyme catalyses dCMP + ATP = dCDP + ADP. The chain is Cytidylate kinase from Parabacteroides distasonis (strain ATCC 8503 / DSM 20701 / CIP 104284 / JCM 5825 / NCTC 11152).